Consider the following 976-residue polypeptide: Leucine--tRNA ligase (976 aa).

The span at 1-23 shows a compositional bias: low complexity; sequence MTESPTTTPGSTSGAPSGVPSGV. The disordered stretch occupies residues 1-34; that stretch reads MTESPTTTPGSTSGAPSGVPSGVNDAESDAPRHR. The 'HIGH' region motif lies at 86-97; that stretch reads PYPSGEGLHVGH. A 'KMSKS' region motif is present at residues 745 to 749; sequence KIGKS. Residue K748 participates in ATP binding.

The protein belongs to the class-I aminoacyl-tRNA synthetase family.

Its subcellular location is the cytoplasm. It carries out the reaction tRNA(Leu) + L-leucine + ATP = L-leucyl-tRNA(Leu) + AMP + diphosphate. The chain is Leucine--tRNA ligase from Mycobacterium marinum (strain ATCC BAA-535 / M).